A 317-amino-acid chain; its full sequence is Ribose-phosphate pyrophosphokinase (317 aa).

ATP is bound by residues 43-45 (DGE) and 102-103 (RQ). Residues lysine 106 and arginine 110 each contribute to the ADP site. Histidine 136 serves as a coordination point for Mg(2+). ADP-binding positions include glutamine 141 and 149 to 150 (DH). Position 175 (aspartate 175) interacts with Mg(2+). The active site involves lysine 198. Residues arginine 200, aspartate 224, and 228-232 (DTAGT) each bind D-ribose 5-phosphate. Position 311-313 (311-313 (SVS)) interacts with ADP.

This sequence belongs to the ribose-phosphate pyrophosphokinase family. Class I subfamily. As to quaternary structure, homohexamer; trimer of dimers. Requires Mg(2+) as cofactor.

It localises to the cytoplasm. It catalyses the reaction D-ribose 5-phosphate + ATP = 5-phospho-alpha-D-ribose 1-diphosphate + AMP + H(+). Its pathway is metabolic intermediate biosynthesis; 5-phospho-alpha-D-ribose 1-diphosphate biosynthesis; 5-phospho-alpha-D-ribose 1-diphosphate from D-ribose 5-phosphate (route I): step 1/1. Its activity is regulated as follows. Activated by inorganic phosphate, and to a lesser extent by sulfate ions. In addition to form a complex with ATP, Mg(2+) also acts as a cofactor. Strongly inhibited by ADP through competitive binding at the activation site and at a specific allosteric site. Less strongly inhibited by alpha,beta-methylene ATP (mADP), AMP, GDP, GMP and UTP. In terms of biological role, involved in the biosynthesis of the central metabolite phospho-alpha-D-ribosyl-1-pyrophosphate (PRPP) via the transfer of pyrophosphoryl group from ATP to 1-hydroxyl of ribose-5-phosphate (Rib-5-P). This Bacillus subtilis (strain 168) protein is Ribose-phosphate pyrophosphokinase.